Reading from the N-terminus, the 434-residue chain is Glutamyl-tRNA reductase (434 aa).

Substrate is bound by residues 49–52 (TCNR), serine 109, 114–116 (EPQ), and glutamine 120. The active-site Nucleophile is the cysteine 50. 189–194 (GAGEMC) contacts NADP(+).

Belongs to the glutamyl-tRNA reductase family. Homodimer.

It carries out the reaction (S)-4-amino-5-oxopentanoate + tRNA(Glu) + NADP(+) = L-glutamyl-tRNA(Glu) + NADPH + H(+). Its pathway is porphyrin-containing compound metabolism; protoporphyrin-IX biosynthesis; 5-aminolevulinate from L-glutamyl-tRNA(Glu): step 1/2. Functionally, catalyzes the NADPH-dependent reduction of glutamyl-tRNA(Glu) to glutamate 1-semialdehyde (GSA). This chain is Glutamyl-tRNA reductase, found in Geobacter sulfurreducens (strain ATCC 51573 / DSM 12127 / PCA).